A 301-amino-acid chain; its full sequence is 5'-adenylylsulfate reductase-like 5 (301 aa).

An N-terminal signal peptide occupies residues 1–21 (MTRCAVVAAVAAVLLVAGAAA). The 114-residue stretch at 51-164 (CIRIEPSPPV…LVDFYKETTG (114 aa)) folds into the Thioredoxin domain. Residue Asn139 is glycosylated (N-linked (GlcNAc...) asparagine). Residues 201 to 221 (FVLLAVLFIILKVAAHFVPIV) form a helical membrane-spanning segment. The N-linked (GlcNAc...) asparagine glycan is linked to Asn268.

The protein localises to the membrane. The polypeptide is 5'-adenylylsulfate reductase-like 5 (APRL5) (Oryza sativa subsp. japonica (Rice)).